The primary structure comprises 330 residues: Phenylalanine--tRNA ligase alpha subunit (330 aa).

A Mg(2+)-binding site is contributed by E257.

The protein belongs to the class-II aminoacyl-tRNA synthetase family. Phe-tRNA synthetase alpha subunit type 1 subfamily. As to quaternary structure, tetramer of two alpha and two beta subunits. The cofactor is Mg(2+).

It localises to the cytoplasm. The catalysed reaction is tRNA(Phe) + L-phenylalanine + ATP = L-phenylalanyl-tRNA(Phe) + AMP + diphosphate + H(+). The polypeptide is Phenylalanine--tRNA ligase alpha subunit (Acaryochloris marina (strain MBIC 11017)).